Here is a 405-residue protein sequence, read N- to C-terminus: Indoleamine 2,3-dioxygenase 2 (405 aa).

Position 347 (H347) interacts with heme.

It belongs to the indoleamine 2,3-dioxygenase family. Heme serves as cofactor. Expressed mainly in antigen-presenting immune cells, liver, kidney, brain, and placenta. Highly expressed in kidney, followed by epididymis and liver (at protein level). Detected in the tails of the spermatozoa in the testis and in the kidney tubules (at protein level). Constitutively expressed in brain.

The catalysed reaction is L-tryptophan + O2 = N-formyl-L-kynurenine. The protein operates within amino-acid degradation; L-tryptophan degradation via kynurenine pathway; L-kynurenine from L-tryptophan: step 1/2. Its activity is regulated as follows. Activity is inhibited by D-1MT (1-methyl-D-tryptophan) and MTH-trp (methylthiohydantoin-DL-tryptophan) but not L-1MT (1-methyl-L-tryptophan). Catalyzes the first and rate-limiting step in the kynurenine pathway of tryptophan catabolism. Involved in immune regulation. This is Indoleamine 2,3-dioxygenase 2 from Mus musculus (Mouse).